The chain runs to 572 residues: Proline--tRNA ligase (572 aa).

The protein belongs to the class-II aminoacyl-tRNA synthetase family. ProS type 1 subfamily. As to quaternary structure, homodimer.

It is found in the cytoplasm. The enzyme catalyses tRNA(Pro) + L-proline + ATP = L-prolyl-tRNA(Pro) + AMP + diphosphate. Functionally, catalyzes the attachment of proline to tRNA(Pro) in a two-step reaction: proline is first activated by ATP to form Pro-AMP and then transferred to the acceptor end of tRNA(Pro). As ProRS can inadvertently accommodate and process non-cognate amino acids such as alanine and cysteine, to avoid such errors it has two additional distinct editing activities against alanine. One activity is designated as 'pretransfer' editing and involves the tRNA(Pro)-independent hydrolysis of activated Ala-AMP. The other activity is designated 'posttransfer' editing and involves deacylation of mischarged Ala-tRNA(Pro). The misacylated Cys-tRNA(Pro) is not edited by ProRS. This chain is Proline--tRNA ligase, found in Edwardsiella ictaluri (strain 93-146).